Reading from the N-terminus, the 602-residue chain is Pentatricopeptide repeat-containing protein At3g04760, chloroplastic (602 aa).

The N-terminal 78 residues, 1–78 (MTPLSSELVG…TDATLPTERR (78 aa)), are a transit peptide targeting the chloroplast. Positions 42–64 (FSNSNPNNDNGRSFSSSGARNLQ) are enriched in polar residues. Residues 42 to 85 (FSNSNPNNDNGRSFSSSGARNLQTTTTTDATLPTERRQQHSQSL) form a disordered region. Positions 65-74 (TTTTTDATLP) are enriched in low complexity. 14 PPR repeats span residues 88 to 122 (RDTQ…GYNP), 123 to 153 (DVIL…LEKF), 157 to 191 (DVFA…DFSP), 192 to 226 (DTVT…NCQP), 227 to 261 (TVIT…GLKP), 262 to 296 (DMFT…GCEP), 297 to 331 (DVIS…KCDP), 332 to 366 (NVVT…GLTP), 367 to 401 (DAYS…GCLP), 402 to 436 (DIVN…GCSP), 437 to 471 (NSSS…GIDP), 472 to 506 (DEIT…EFHP), 507 to 541 (SVVT…GCRP), and 542 to 576 (NETT…DAIS).

The protein belongs to the PPR family. P subfamily.

The protein resides in the plastid. It localises to the chloroplast. This is Pentatricopeptide repeat-containing protein At3g04760, chloroplastic from Arabidopsis thaliana (Mouse-ear cress).